Here is a 69-residue protein sequence, read N- to C-terminus: uncharacterized protein (69 aa).

At 1 to 15 (MLLYIVIIVACIISK) the chain is on the cytoplasmic side. Residues 16–36 (LVPNEYWAIHLFFIIMIFMVY) traverse the membrane as a helical segment. The Extracellular portion of the chain corresponds to 37–69 (MYEKLDIHQKYQFWNYTMSGLSGHNVQVICKCY). N51 is a glycosylation site (N-linked (GlcNAc...) asparagine; by host).

Belongs to the asfivirus X69R family.

It is found in the host membrane. This is an uncharacterized protein from Ornithodoros (relapsing fever ticks).